Reading from the N-terminus, the 636-residue chain is DNA ligase (636 aa).

Lysine 113 serves as the catalytic N6-AMP-lysine intermediate. Residues 560-636 (NSEGIFQNQT…KSSFSKKFEK (77 aa)) enclose the BRCT domain.

This sequence belongs to the NAD-dependent DNA ligase family.

It catalyses the reaction NAD(+) + (deoxyribonucleotide)n-3'-hydroxyl + 5'-phospho-(deoxyribonucleotide)m = (deoxyribonucleotide)n+m + AMP + beta-nicotinamide D-nucleotide.. Catalyzes the formation of phosphodiester linkages between 5'-phosphoryl and 3'-hydroxyl groups in double-stranded DNA using NAD as a coenzyme and as the energy source for the reaction. In Acanthamoeba polyphaga (Amoeba), this protein is DNA ligase.